Here is a 137-residue protein sequence, read N- to C-terminus: Glycine cleavage system H protein (137 aa).

The 83-residue stretch at 36-118 (PAIIGITEYA…YGEGWLLKVE (83 aa)) folds into the Lipoyl-binding domain. The residue at position 77 (Lys-77) is an N6-lipoyllysine.

The protein belongs to the GcvH family. The glycine cleavage system is composed of four proteins: P, T, L and H. It depends on (R)-lipoate as a cofactor.

In terms of biological role, the glycine cleavage system catalyzes the degradation of glycine. The H protein shuttles the methylamine group of glycine from the P protein to the T protein. This Bifidobacterium longum (strain NCC 2705) protein is Glycine cleavage system H protein.